We begin with the raw amino-acid sequence, 441 residues long: N-acetyl-S-(2-succino)cysteine monooxygenase (441 aa).

FMN-binding residues include D59, T96, H146, Y150, S220, and S221.

Belongs to the NtaA/SnaA/DszA monooxygenase family. Homodimer. FMN serves as cofactor.

It carries out the reaction N-acetyl-S-(2-succino)-L-cysteine + NADH + O2 + H(+) = N-acetyl-L-cysteine + oxaloacetate + NAD(+) + H2O. The protein operates within amino-acid biosynthesis; L-cysteine biosynthesis. Catalyzes the oxidative cleavage of the C-S bond of N-acetyl-S-(2-succino)cysteine, forming oxaloacetate and N-acetylcysteine (NAC). Is involved in a S-(2-succino)cysteine (2SC) degradation pathway that allows B.subtilis to grow on 2SC as a sole sulfur source, via its metabolization to cysteine. Shows almost no activity on S-succinylglutathione and 2SC. This Bacillus subtilis (strain 168) protein is N-acetyl-S-(2-succino)cysteine monooxygenase.